The chain runs to 93 residues: N-myc protein (93 aa).

As to quaternary structure, efficient DNA binding requires dimerization with another bHLH protein. Binds DNA as a heterodimer with MAX. Barely detectable in most tissues assayed.

It localises to the nucleus. Its function is as follows. May function as a transcription factor. This is N-myc protein (mycn) from Danio rerio (Zebrafish).